We begin with the raw amino-acid sequence, 64 residues long: Protein DsrB (64 aa).

The protein belongs to the DsrB family.

The sequence is that of Protein DsrB from Salmonella enteritidis PT4 (strain P125109).